Consider the following 191-residue polypeptide: Large ribosomal subunit protein uL6 (191 aa).

The protein belongs to the universal ribosomal protein uL6 family. In terms of assembly, part of the 50S ribosomal subunit.

In terms of biological role, this protein binds to the 23S rRNA, and is important in its secondary structure. It is located near the subunit interface in the base of the L7/L12 stalk, and near the tRNA binding site of the peptidyltransferase center. The polypeptide is Large ribosomal subunit protein uL6 (Gloeobacter violaceus (strain ATCC 29082 / PCC 7421)).